The sequence spans 319 residues: Malate dehydrogenase (319 aa).

Residues 10–15 (GSGNIG) and D34 each bind NAD(+). 2 residues coordinate substrate: R83 and R89. NAD(+) contacts are provided by residues N96 and 119 to 121 (ITN). Substrate is bound by residues N121 and R152. H176 serves as the catalytic Proton acceptor.

Belongs to the LDH/MDH superfamily. MDH type 3 family.

It catalyses the reaction (S)-malate + NAD(+) = oxaloacetate + NADH + H(+). Functionally, catalyzes the reversible oxidation of malate to oxaloacetate. The chain is Malate dehydrogenase from Paramagnetospirillum magneticum (strain ATCC 700264 / AMB-1) (Magnetospirillum magneticum).